A 204-amino-acid polypeptide reads, in one-letter code: Elongation factor Ts (204 aa).

The interval 87-90 (TDFV) is involved in Mg(2+) ion dislocation from EF-Tu.

The protein belongs to the EF-Ts family.

Its subcellular location is the cytoplasm. In terms of biological role, associates with the EF-Tu.GDP complex and induces the exchange of GDP to GTP. It remains bound to the aminoacyl-tRNA.EF-Tu.GTP complex up to the GTP hydrolysis stage on the ribosome. The chain is Elongation factor Ts from Frankia casuarinae (strain DSM 45818 / CECT 9043 / HFP020203 / CcI3).